A 312-amino-acid chain; its full sequence is MPSAIEAIYIILIAGELTIGIWGNGFIVLVNCIDWLKRRDVSLIDIILISLAISRICLLXVISLDGFFMLLFPTTYGNSVLVSIVBIVWTFANNSSLWFTSCLSIFYLLKIANISHPFFFWLKLKINKVILAILLGSFLISLVISVXMNDDMWYHLFKVSHEENITWEFKVSKIPGTFKQLTLNLGAMVPFILCLISFSLLLFSLVRHTKQIQLXATGFRDPSTEAHMRAIKAVIIFLLLLIVYYPVFLVMTSSALIPQGKLVLMIGDIVTITFPSSHSFILIMGNSKLREAFLKMLRFVKRFLRRRKPFVP.

At 1-9 (MPSAIEAIY) the chain is on the extracellular side. Residues 10-32 (IILIAGELTIGIWGNGFIVLVNC) form a helical membrane-spanning segment. The Cytoplasmic portion of the chain corresponds to 33 to 52 (IDWLKRRDVSLIDIILISLA). A helical transmembrane segment spans residues 53 to 72 (ISRICLLXVISLDGFFMLLF). The Extracellular segment spans residues 73-86 (PTTYGNSVLVSIVB). The chain crosses the membrane as a helical span at residues 87 to 109 (IVWTFANNSSLWFTSCLSIFYLL). The Cytoplasmic portion of the chain corresponds to 110 to 128 (KIANISHPFFFWLKLKINK). Residues 129–146 (VILAILLGSFLISLVISV) traverse the membrane as a helical segment. Residues 147-180 (XMNDDMWYHLFKVSHEENITWEFKVSKIPGTFKQ) are Extracellular-facing. A glycan (N-linked (GlcNAc...) asparagine) is linked at asparagine 164. Residues 181–203 (LTLNLGAMVPFILCLISFSLLLF) traverse the membrane as a helical segment. The Cytoplasmic portion of the chain corresponds to 204-234 (SLVRHTKQIQLXATGFRDPSTEAHMRAIKAV). Residues 235-257 (IIFLLLLIVYYPVFLVMTSSALI) form a helical membrane-spanning segment. At 258–261 (PQGK) the chain is on the extracellular side. The chain crosses the membrane as a helical span at residues 262–284 (LVLMIGDIVTITFPSSHSFILIM). Over 285–312 (GNSKLREAFLKMLRFVKRFLRRRKPFVP) the chain is Cytoplasmic.

It belongs to the G-protein coupled receptor T2R family.

Its subcellular location is the membrane. Its function is as follows. Gustducin-coupled receptor implicated in the perception of bitter compounds in the oral cavity and the gastrointestinal tract. Signals through PLCB2 and the calcium-regulated cation channel TRPM5. The sequence is that of Taste receptor type 2 member 9 (TAS2R9) from Pongo pygmaeus (Bornean orangutan).